The following is a 207-amino-acid chain: ConoCAP (207 aa).

The first 21 residues, 1–21 (MVSLGHVLFVILLPVLLPVAA), serve as a signal peptide directing secretion. A propeptide spanning residues 22–48 (DDPDDQMLSQISLPSSSRSEYDDNDVS) is cleaved from the precursor. Residues C53 and C59 are joined by a disulfide bond. G60 carries the post-translational modification Glycine amide. Residues 63–82 (HRDRSRRQERYGKRLIPVLA) constitute a propeptide that is removed on maturation. C87 and C92 are oxidised to a cystine. At N94 the chain carries Asparagine amide. A propeptide spanning residues 98-160 (SLSGAGPALS…RDPAASGDLS (63 aa)) is cleaved from the precursor. A disordered region spans residues 131–155 (ARHEQQQQLLQQREQRGLESRDPAA). The segment covering 143-152 (REQRGLESRD) has biased composition (basic and acidic residues). A disulfide bond links C165 and C171. Position 173 is a glycine amide (G173). Positions 177 to 207 (TLYSPWLERMNEVADDRSARNALCTRLGWRE) are excised as a propeptide.

Expressed by the venom duct.

Its subcellular location is the secreted. Functionally, in contrast to other members of the CCAP family which are cardio-accelerators, conoCAP-a decreases the heart frequency in Drosophila larvae (26%), rats and zebrafish embryos. It also reduces the blood pressure in rats. It decreases systolic calcium in ventricular cardiac myocytes, indicating that it may act via impairment of intracellular calcium trafficking. Its function is as follows. Synthetic conoCAP-b decreases the heart frequency of 23% in Drosophila larvae. In terms of biological role, synthetic conoCAP-c decreases the heart frequency of 12% in Drosophila larvae. This Conus villepinii (Villepin's cone) protein is ConoCAP (conoCAP).